The chain runs to 132 residues: D-ribose pyranase (132 aa).

The active-site Proton donor is the His20. Substrate-binding positions include Asp28, His99, and 121-123 (YSN).

The protein belongs to the RbsD / FucU family. RbsD subfamily. Homodecamer.

It is found in the cytoplasm. It catalyses the reaction beta-D-ribopyranose = beta-D-ribofuranose. It participates in carbohydrate metabolism; D-ribose degradation; D-ribose 5-phosphate from beta-D-ribopyranose: step 1/2. In terms of biological role, catalyzes the interconversion of beta-pyran and beta-furan forms of D-ribose. In Streptococcus uberis (strain ATCC BAA-854 / 0140J), this protein is D-ribose pyranase.